We begin with the raw amino-acid sequence, 169 residues long: Ribosome maturation factor RimM (169 aa).

The 73-residue stretch at 94–166 folds into the PRC barrel domain; sequence EEGFYDHELE…TATITPPDGL (73 aa).

It belongs to the RimM family. Binds ribosomal protein uS19.

It localises to the cytoplasm. Its function is as follows. An accessory protein needed during the final step in the assembly of 30S ribosomal subunit, possibly for assembly of the head region. Essential for efficient processing of 16S rRNA. May be needed both before and after RbfA during the maturation of 16S rRNA. It has affinity for free ribosomal 30S subunits but not for 70S ribosomes. The chain is Ribosome maturation factor RimM from Corynebacterium efficiens (strain DSM 44549 / YS-314 / AJ 12310 / JCM 11189 / NBRC 100395).